The sequence spans 291 residues: Mitochondrial fission factor (291 aa).

Topologically, residues 1-271 are cytoplasmic; the sequence is MAEISRIQYE…ENKERAKREM (271 aa). Phosphothreonine is present on Thr-89. The interval 106-134 is disordered; it reads LERPLPTPQSEESRAVGRLKRERSMSENA. Phosphoserine occurs at positions 129, 131, and 146. Thr-149 is modified (phosphothreonine). Phosphoserine occurs at positions 151, 178, 182, and 244. A coiled-coil region spans residues 240 to 271; that stretch reads VDAASLRRQIIKLNRRLQLLEEENKERAKREM. Residues 272-289 form a helical; Anchor for type IV membrane protein membrane-spanning segment; the sequence is VMYSITVAFWLLNSWLWF. Over 290–291 the chain is Mitochondrial intermembrane; sequence RR.

Belongs to the Tango11 family. Homodimer. Interacts with DNM1L. Interacts with C11orf65/MFI; the interaction inhibits MFF interaction with DNM1L.

The protein resides in the mitochondrion outer membrane. It is found in the peroxisome. The protein localises to the cytoplasmic vesicle. Its subcellular location is the secretory vesicle. It localises to the synaptic vesicle. Functionally, plays a role in mitochondrial and peroxisomal fission. Promotes the recruitment and association of the fission mediator dynamin-related protein 1 (DNM1L) to the mitochondrial surface. May be involved in regulation of synaptic vesicle membrane dynamics by recruitment of DNM1L to clathrin-containing vesicles. The chain is Mitochondrial fission factor (Mff) from Mus musculus (Mouse).